The sequence spans 320 residues: Malate dehydrogenase (320 aa).

NAD(+)-binding positions include 10–15 (GSGMIG) and Asp-34. Positions 83 and 89 each coordinate substrate. NAD(+) is bound by residues Asn-96 and 119-121 (ITN). Residues Asn-121 and Arg-152 each coordinate substrate. His-176 serves as the catalytic Proton acceptor.

It belongs to the LDH/MDH superfamily. MDH type 3 family.

The enzyme catalyses (S)-malate + NAD(+) = oxaloacetate + NADH + H(+). Catalyzes the reversible oxidation of malate to oxaloacetate. In Brucella anthropi (strain ATCC 49188 / DSM 6882 / CCUG 24695 / JCM 21032 / LMG 3331 / NBRC 15819 / NCTC 12168 / Alc 37) (Ochrobactrum anthropi), this protein is Malate dehydrogenase.